A 288-amino-acid polypeptide reads, in one-letter code: 33 kDa chaperonin (288 aa).

Cystine bridges form between cysteine 236-cysteine 238 and cysteine 269-cysteine 272.

This sequence belongs to the HSP33 family. Post-translationally, under oxidizing conditions two disulfide bonds are formed involving the reactive cysteines. Under reducing conditions zinc is bound to the reactive cysteines and the protein is inactive.

The protein localises to the cytoplasm. Functionally, redox regulated molecular chaperone. Protects both thermally unfolding and oxidatively damaged proteins from irreversible aggregation. Plays an important role in the bacterial defense system toward oxidative stress. This Lactococcus lactis subsp. cremoris (strain MG1363) protein is 33 kDa chaperonin.